The chain runs to 397 residues: Phosphoglycerate kinase (397 aa).

Residues Asp-21 to Asn-23, Arg-37, His-60 to Arg-63, Arg-119, and Arg-152 each bind substrate. ATP-binding positions include Lys-203, Gly-294, Glu-325, and Gly-354 to Ser-357.

Belongs to the phosphoglycerate kinase family. In terms of assembly, monomer.

The protein localises to the cytoplasm. The catalysed reaction is (2R)-3-phosphoglycerate + ATP = (2R)-3-phospho-glyceroyl phosphate + ADP. Its pathway is carbohydrate degradation; glycolysis; pyruvate from D-glyceraldehyde 3-phosphate: step 2/5. This is Phosphoglycerate kinase from Chlorobium limicola (strain DSM 245 / NBRC 103803 / 6330).